A 715-amino-acid polypeptide reads, in one-letter code: Elongation factor G (715 aa).

The region spanning 8-290 (NRYRNIGICA…AVIDFLPAPT (283 aa)) is the tr-type G domain. Residues 17-24 (AHVDAGKT), 88-92 (DTPGH), and 142-145 (NKMD) contribute to the GTP site.

This sequence belongs to the TRAFAC class translation factor GTPase superfamily. Classic translation factor GTPase family. EF-G/EF-2 subfamily.

It is found in the cytoplasm. Functionally, catalyzes the GTP-dependent ribosomal translocation step during translation elongation. During this step, the ribosome changes from the pre-translocational (PRE) to the post-translocational (POST) state as the newly formed A-site-bound peptidyl-tRNA and P-site-bound deacylated tRNA move to the P and E sites, respectively. Catalyzes the coordinated movement of the two tRNA molecules, the mRNA and conformational changes in the ribosome. The sequence is that of Elongation factor G from Pseudomonas fluorescens (strain ATCC BAA-477 / NRRL B-23932 / Pf-5).